The primary structure comprises 126 residues: MASQTQGIQQLLAAEKRAAEKINEARKRKLQRTKQAKQEAQAEVEKYKQQREQEFKGFEQQYLGTKEDIESKIRRDTEDQINGMKQSVASNKQAVIVRLLQLVCDIKPELHHNLTLQKKLHGQFAA.

Residues 23–45 (NEARKRKLQRTKQAKQEAQAEVE) are disordered. The segment covering 26–35 (RKRKLQRTKQ) has biased composition (basic residues).

It belongs to the V-ATPase G subunit family. As to quaternary structure, V-ATPase is a heteromultimeric enzyme made up of two complexes: the ATP-hydrolytic V1 complex and the proton translocation V0 complex. The V1 complex consists of three catalytic AB heterodimers that form a heterohexamer, three peripheral stalks each consisting of EG heterodimers, one central rotor including subunits D and F, and the regulatory subunits C and H. The proton translocation complex V0 consists of the proton transport subunit a, a ring of proteolipid subunits c9c'', rotary subunit d, subunits e and f, and the accessory subunits vah-19/Ac45 and vah-20/PRR.

Subunit of the V1 complex of vacuolar(H+)-ATPase (V-ATPase), a multisubunit enzyme composed of a peripheral complex (V1) that hydrolyzes ATP and a membrane integral complex (V0) that translocates protons. V-ATPase is responsible for acidifying and maintaining the pH of intracellular compartments and in some cell types, is targeted to the plasma membrane, where it is responsible for acidifying the extracellular environment. In neurons, required for necrotic cell death by promoting intracellular acidification. The protein is Probable V-type proton ATPase subunit G of Caenorhabditis briggsae.